The primary structure comprises 294 residues: Elongation factor Ts (294 aa).

Residues 81–84 (TDFV) form an involved in Mg(2+) ion dislocation from EF-Tu region.

Belongs to the EF-Ts family.

Its subcellular location is the cytoplasm. Functionally, associates with the EF-Tu.GDP complex and induces the exchange of GDP to GTP. It remains bound to the aminoacyl-tRNA.EF-Tu.GTP complex up to the GTP hydrolysis stage on the ribosome. In Lawsonia intracellularis (strain PHE/MN1-00), this protein is Elongation factor Ts.